A 571-amino-acid polypeptide reads, in one-letter code: UvrABC system protein C (571 aa).

The GIY-YIG domain maps to T15–I93. In terms of domain architecture, UVR spans N184 to L219.

The protein belongs to the UvrC family. Interacts with UvrB in an incision complex.

It is found in the cytoplasm. Its function is as follows. The UvrABC repair system catalyzes the recognition and processing of DNA lesions. UvrC both incises the 5' and 3' sides of the lesion. The N-terminal half is responsible for the 3' incision and the C-terminal half is responsible for the 5' incision. In Mycoplasmopsis agalactiae (strain NCTC 10123 / CIP 59.7 / PG2) (Mycoplasma agalactiae), this protein is UvrABC system protein C.